Reading from the N-terminus, the 308-residue chain is Aspartate carbamoyltransferase catalytic subunit (308 aa).

The carbamoyl phosphate site is built by arginine 58 and threonine 59. Lysine 86 contributes to the L-aspartate binding site. Residues arginine 108, histidine 136, and glutamine 139 each coordinate carbamoyl phosphate. 2 residues coordinate L-aspartate: arginine 169 and arginine 227. Carbamoyl phosphate contacts are provided by glycine 268 and proline 269.

It belongs to the aspartate/ornithine carbamoyltransferase superfamily. ATCase family. As to quaternary structure, heterododecamer (2C3:3R2) of six catalytic PyrB chains organized as two trimers (C3), and six regulatory PyrI chains organized as three dimers (R2).

The catalysed reaction is carbamoyl phosphate + L-aspartate = N-carbamoyl-L-aspartate + phosphate + H(+). It participates in pyrimidine metabolism; UMP biosynthesis via de novo pathway; (S)-dihydroorotate from bicarbonate: step 2/3. Catalyzes the condensation of carbamoyl phosphate and aspartate to form carbamoyl aspartate and inorganic phosphate, the committed step in the de novo pyrimidine nucleotide biosynthesis pathway. The chain is Aspartate carbamoyltransferase catalytic subunit from Chloroflexus aurantiacus (strain ATCC 29366 / DSM 635 / J-10-fl).